Consider the following 340-residue polypeptide: 4-hydroxy-3-methylbut-2-enyl diphosphate reductase (340 aa).

Cys-13 is a [4Fe-4S] cluster binding site. (2E)-4-hydroxy-3-methylbut-2-enyl diphosphate-binding residues include His-42 and His-75. Residues His-42 and His-75 each coordinate dimethylallyl diphosphate. Isopentenyl diphosphate is bound by residues His-42 and His-75. Cys-97 contacts [4Fe-4S] cluster. His-125 lines the (2E)-4-hydroxy-3-methylbut-2-enyl diphosphate pocket. His-125 serves as a coordination point for dimethylallyl diphosphate. Residue His-125 coordinates isopentenyl diphosphate. The active-site Proton donor is the Glu-127. Thr-165 is a (2E)-4-hydroxy-3-methylbut-2-enyl diphosphate binding site. Cys-195 contacts [4Fe-4S] cluster. Ser-223, Ser-224, Asn-225, and Ser-267 together coordinate (2E)-4-hydroxy-3-methylbut-2-enyl diphosphate. Positions 223, 224, 225, and 267 each coordinate dimethylallyl diphosphate. Isopentenyl diphosphate-binding residues include Ser-223, Ser-224, Asn-225, and Ser-267. Residues 317-340 (NNLDNKTAASEEADSLSNDTEQEA) form a disordered region. Residues 331–340 (SLSNDTEQEA) are compositionally biased toward polar residues.

It belongs to the IspH family. [4Fe-4S] cluster is required as a cofactor.

The enzyme catalyses isopentenyl diphosphate + 2 oxidized [2Fe-2S]-[ferredoxin] + H2O = (2E)-4-hydroxy-3-methylbut-2-enyl diphosphate + 2 reduced [2Fe-2S]-[ferredoxin] + 2 H(+). The catalysed reaction is dimethylallyl diphosphate + 2 oxidized [2Fe-2S]-[ferredoxin] + H2O = (2E)-4-hydroxy-3-methylbut-2-enyl diphosphate + 2 reduced [2Fe-2S]-[ferredoxin] + 2 H(+). It participates in isoprenoid biosynthesis; dimethylallyl diphosphate biosynthesis; dimethylallyl diphosphate from (2E)-4-hydroxy-3-methylbutenyl diphosphate: step 1/1. It functions in the pathway isoprenoid biosynthesis; isopentenyl diphosphate biosynthesis via DXP pathway; isopentenyl diphosphate from 1-deoxy-D-xylulose 5-phosphate: step 6/6. In terms of biological role, catalyzes the conversion of 1-hydroxy-2-methyl-2-(E)-butenyl 4-diphosphate (HMBPP) into a mixture of isopentenyl diphosphate (IPP) and dimethylallyl diphosphate (DMAPP). Acts in the terminal step of the DOXP/MEP pathway for isoprenoid precursor biosynthesis. The chain is 4-hydroxy-3-methylbut-2-enyl diphosphate reductase from Zymomonas mobilis subsp. mobilis (strain ATCC 31821 / ZM4 / CP4).